Reading from the N-terminus, the 283-residue chain is Small ribosomal subunit protein uS2B (283 aa).

Positions 254–283 (GQVGQSAWDEEGDWNTTGAAQTSDWANTVA) are disordered. The span at 267–283 (WNTTGAAQTSDWANTVA) shows a compositional bias: polar residues.

The protein belongs to the universal ribosomal protein uS2 family. As to quaternary structure, component of the small ribosomal subunit. Mature ribosomes consist of a small (40S) and a large (60S) subunit. The 40S subunit contains about 33 different proteins and 1 molecule of RNA (18S). The 60S subunit contains about 49 different proteins and 3 molecules of RNA (25S, 5.8S and 5S). Interacts with rps21.

The protein resides in the cytoplasm. Required for the assembly and/or stability of the 40S ribosomal subunit. Required for the processing of the 20S rRNA-precursor to mature 18S rRNA in a late step of the maturation of 40S ribosomal subunits. This chain is Small ribosomal subunit protein uS2B (rps0b), found in Schizosaccharomyces japonicus (strain yFS275 / FY16936) (Fission yeast).